Consider the following 924-residue polypeptide: DNA repair and recombination protein RDH54 (924 aa).

The span at 1–10 shows a compositional bias: basic and acidic residues; the sequence is MQIPKYENKP. Disordered stretches follow at residues 1-21 and 155-183; these read MQIP…GSNK and EALS…NDGG. Low complexity predominate over residues 168-178; the sequence is TTSTTETVPST. One can recognise a Helicase ATP-binding domain in the interval 299 to 487; the sequence is LENDSDISGC…FTIIDFINPG (189 aa). An ATP-binding site is contributed by 346–353; that stretch reads IPLTGLCK. Positions 472–475 match the DEGH box motif; it reads NDLN. A Glycyl lysine isopeptide (Lys-Gly) (interchain with G-Cter in ubiquitin) cross-link involves residue lysine 615. Residues 631–790 enclose the Helicase C-terminal domain; that stretch reads KLKVLMTLLE…DSEMRNKESS (160 aa).

This sequence belongs to the SNF2/RAD54 helicase family. In terms of assembly, interacts with RAD51 and DMC1.

The protein resides in the nucleus. It catalyses the reaction ATP + H2O = ADP + phosphate + H(+). Involved in the recombinational repair of double-strand breaks (DSB) in DNA during mitosis and meiosis. Has DNA dependent ATPase activity. Promotes D-loop (displacement loop) formation with RAD51 recombinase. Modifies the topology of double-stranded DNA during the D-loop reaction to facilitate the invasion of the homologous duplex molecule by the initiating single-stranded DNA substrate. Required for adaptation from G2/M checkpoint arrest induced by a double strand break, by participating in monitoring the extent of single-stranded DNA produced by resection of DNA ends. This role is distinct from its roles in recombination. Promotes colocalization of RAD51 and DMC1 during meiotic recombination. Involved in crossover interference. The polypeptide is DNA repair and recombination protein RDH54 (RDH54) (Saccharomyces cerevisiae (strain JAY291) (Baker's yeast)).